A 181-amino-acid polypeptide reads, in one-letter code: Crustacyanin-C1 subunit (181 aa).

Disulfide bonds link Cys12–Cys121, Cys51–Cys173, and Cys117–Cys150.

The protein belongs to the calycin superfamily. Lipocalin family. As to quaternary structure, oligomer; Can form dimers (beta-crustacyanin); or complexes of 16 subunits (alpha-crustacyanin). There are five types of subunits: A1, A2, A3, C1 and C2. As to expression, found in the carapace.

The protein resides in the secreted. Its subcellular location is the extracellular space. Functionally, binds the carotenoid astaxanthin (AXT) which provides the blue coloration to the carapace of the lobster. This chain is Crustacyanin-C1 subunit, found in Homarus gammarus (European lobster).